Here is a 735-residue protein sequence, read N- to C-terminus: Photosystem I P700 chlorophyll a apoprotein A2 (735 aa).

A run of 8 helical transmembrane segments spans residues 46 to 69 (IFASHFGQLAIIFLWTSGNLFHVA), 135 to 158 (LYTGALFLLFLSTLSLIGGWLHLQ), 175 to 199 (LNHHLSGLFGVSSLAWTGHLVHVAI), 274 to 292 (IAHHHLAIAFIFLIAGHMY), 331 to 354 (IHFQLGLALASLGVITSLVAQHMY), 370 to 396 (AALYTHHQYIAGFIMTGAFAHGAIFFI), 418 to 440 (AIISHLSWASLFLGFHTLGPYVH), and 518 to 536 (FLVHHAIALGLHTTTLILV). Cys-560 and Cys-569 together coordinate [4Fe-4S] cluster. Transmembrane regions (helical) follow at residues 576–597 (AFYLAVFWMLNTIGWVTFYWHW) and 644–666 (LSVWAWMFLFGHLVWATGFMFLI). Positions 655, 663, and 671 each coordinate chlorophyll a. Position 672 (Trp-672) interacts with phylloquinone. Residues 708–728 (LVGLAHFSVGYIFTYAAFLIA) form a helical membrane-spanning segment.

The protein belongs to the PsaA/PsaB family. As to quaternary structure, the PsaA/B heterodimer binds the P700 chlorophyll special pair and subsequent electron acceptors. PSI consists of a core antenna complex that captures photons, and an electron transfer chain that converts photonic excitation into a charge separation. The eukaryotic PSI reaction center is composed of at least 11 subunits. P700 is a chlorophyll a/chlorophyll a' dimer, A0 is one or more chlorophyll a, A1 is one or both phylloquinones and FX is a shared 4Fe-4S iron-sulfur center. is required as a cofactor.

The protein resides in the plastid. It is found in the chloroplast thylakoid membrane. It carries out the reaction reduced [plastocyanin] + hnu + oxidized [2Fe-2S]-[ferredoxin] = oxidized [plastocyanin] + reduced [2Fe-2S]-[ferredoxin]. In terms of biological role, psaA and PsaB bind P700, the primary electron donor of photosystem I (PSI), as well as the electron acceptors A0, A1 and FX. PSI is a plastocyanin-ferredoxin oxidoreductase, converting photonic excitation into a charge separation, which transfers an electron from the donor P700 chlorophyll pair to the spectroscopically characterized acceptors A0, A1, FX, FA and FB in turn. Oxidized P700 is reduced on the lumenal side of the thylakoid membrane by plastocyanin. The polypeptide is Photosystem I P700 chlorophyll a apoprotein A2 (Zea mays (Maize)).